The chain runs to 202 residues: CASP-like protein 2B1 (202 aa).

Residues 1 to 29 (MSYLGVGVSPGNVPVYHGTNSKVIDRRVR) lie on the Cytoplasmic side of the membrane. A helical membrane pass occupies residues 30–50 (LAELVLRCVICCLGVLAAVLV). The Extracellular segment spans residues 51–72 (GTDTQVKEIFSIQKKARFTDMK). A helical membrane pass occupies residues 73–93 (ALVFLVAANGIAAAYSFVQGV). Over 94 to 109 (RCVVGMVKGSVLFSKP) the chain is Cytoplasmic. The chain crosses the membrane as a helical span at residues 110–132 (LAWVIFSGDQMMAYLTMSAVAAA). Over 133 to 164 (AQSSVFAKLGQPDLQWMKICTMYGKFCNQVGE) the chain is Extracellular. A helical membrane pass occupies residues 165–185 (GIASALLVSVSMVVLSCISAF). The Cytoplasmic portion of the chain corresponds to 186–202 (SLFRLYGGNKGKDGARW).

The protein belongs to the Casparian strip membrane proteins (CASP) family. As to quaternary structure, homodimer and heterodimers.

The protein resides in the cell membrane. This is CASP-like protein 2B1 from Populus trichocarpa (Western balsam poplar).